A 264-amino-acid chain; its full sequence is NAD-capped RNA hydrolase NudC (264 aa).

A substrate-binding site is contributed by Arg-70. Residues Cys-99 and Cys-102 each coordinate Zn(2+). Glu-112 serves as a coordination point for substrate. Positions 117 and 122 each coordinate Zn(2+). Tyr-127 contacts substrate. Residues 128–257 form the Nudix hydrolase domain; sequence PVICPSIIVA…TIALKLINAT (130 aa). The a divalent metal cation site is built by Ala-166, Glu-182, and Glu-186. Positions 167–188 match the Nudix box motif; the sequence is GFVEIGESFEQTVEREVFEETG. 200-207 lines the substrate pocket; sequence QPWAFPNS. An a divalent metal cation-binding site is contributed by Glu-227. Ala-250 lines the substrate pocket.

The protein belongs to the Nudix hydrolase family. NudC subfamily. In terms of assembly, homodimer. Mg(2+) serves as cofactor. The cofactor is Mn(2+). Zn(2+) is required as a cofactor.

It carries out the reaction a 5'-end NAD(+)-phospho-ribonucleoside in mRNA + H2O = a 5'-end phospho-adenosine-phospho-ribonucleoside in mRNA + beta-nicotinamide D-ribonucleotide + 2 H(+). It catalyses the reaction NAD(+) + H2O = beta-nicotinamide D-ribonucleotide + AMP + 2 H(+). The catalysed reaction is NADH + H2O = reduced beta-nicotinamide D-ribonucleotide + AMP + 2 H(+). Its function is as follows. mRNA decapping enzyme that specifically removes the nicotinamide adenine dinucleotide (NAD) cap from a subset of mRNAs by hydrolyzing the diphosphate linkage to produce nicotinamide mononucleotide (NMN) and 5' monophosphate mRNA. The NAD-cap is present at the 5'-end of some mRNAs and stabilizes RNA against 5'-processing. Has preference for mRNAs with a 5'-end purine. Catalyzes the hydrolysis of a broad range of dinucleotide pyrophosphates. The polypeptide is NAD-capped RNA hydrolase NudC (Actinobacillus succinogenes (strain ATCC 55618 / DSM 22257 / CCUG 43843 / 130Z)).